The primary structure comprises 280 residues: Monoacylglycerol lipase (280 aa).

The active-site Nucleophile is the serine 111. Active-site charge relay system residues include aspartate 227 and histidine 257.

Belongs to the AB hydrolase superfamily.

Its subcellular location is the secreted. The protein localises to the cell wall. The catalysed reaction is Hydrolyzes glycerol monoesters of long-chain fatty acids.. Functionally, contributes to cell growth, probably by hydrolyzing exogenous lipids. Catalyzes the hydrolysis of monoacylglycerols (MAG) with fatty acid chains ranging from C14 to C18, with a maximum activity on monoolein. Is unable to hydrolyze long-chain diacylglycerol (DAG). The sequence is that of Monoacylglycerol lipase from Mycolicibacterium smegmatis (strain ATCC 700084 / mc(2)155) (Mycobacterium smegmatis).